The following is a 273-amino-acid chain: Dermonecrotic toxin LhSicTox-alphaIA2bii (273 aa).

H5 is an active-site residue. Positions 25 and 27 each coordinate Mg(2+). Catalysis depends on H41, which acts as the Nucleophile. 2 disulfide bridges follow: C45–C51 and C47–C190. D85 contributes to the Mg(2+) binding site.

Belongs to the arthropod phospholipase D family. Class II subfamily. Mg(2+) is required as a cofactor. Expressed by the venom gland.

It localises to the secreted. The enzyme catalyses an N-(acyl)-sphingosylphosphocholine = an N-(acyl)-sphingosyl-1,3-cyclic phosphate + choline. The catalysed reaction is an N-(acyl)-sphingosylphosphoethanolamine = an N-(acyl)-sphingosyl-1,3-cyclic phosphate + ethanolamine. It catalyses the reaction a 1-acyl-sn-glycero-3-phosphocholine = a 1-acyl-sn-glycero-2,3-cyclic phosphate + choline. It carries out the reaction a 1-acyl-sn-glycero-3-phosphoethanolamine = a 1-acyl-sn-glycero-2,3-cyclic phosphate + ethanolamine. Dermonecrotic toxins cleave the phosphodiester linkage between the phosphate and headgroup of certain phospholipids (sphingolipid and lysolipid substrates), forming an alcohol (often choline) and a cyclic phosphate. This toxin acts on sphingomyelin (SM). It may also act on ceramide phosphoethanolamine (CPE), lysophosphatidylcholine (LPC) and lysophosphatidylethanolamine (LPE), but not on lysophosphatidylserine (LPS), and lysophosphatidylglycerol (LPG). It acts by transphosphatidylation, releasing exclusively cyclic phosphate products as second products. Induces dermonecrosis, hemolysis, increased vascular permeability, edema, inflammatory response, and platelet aggregation. This Loxosceles hirsuta (Recluse spider) protein is Dermonecrotic toxin LhSicTox-alphaIA2bii.